The following is a 179-amino-acid chain: Large ribosomal subunit protein uL6 (179 aa).

It belongs to the universal ribosomal protein uL6 family. Part of the 50S ribosomal subunit.

In terms of biological role, this protein binds to the 23S rRNA, and is important in its secondary structure. It is located near the subunit interface in the base of the L7/L12 stalk, and near the tRNA binding site of the peptidyltransferase center. This chain is Large ribosomal subunit protein uL6, found in Acidothermus cellulolyticus (strain ATCC 43068 / DSM 8971 / 11B).